The following is a 437-amino-acid chain: Histidine--tRNA ligase (437 aa).

Belongs to the class-II aminoacyl-tRNA synthetase family. In terms of assembly, homodimer.

The protein localises to the cytoplasm. It carries out the reaction tRNA(His) + L-histidine + ATP = L-histidyl-tRNA(His) + AMP + diphosphate + H(+). This chain is Histidine--tRNA ligase, found in Leptospira biflexa serovar Patoc (strain Patoc 1 / Ames).